A 165-amino-acid polypeptide reads, in one-letter code: S-ribosylhomocysteine lyase (165 aa).

Residues histidine 54, histidine 58, and cysteine 128 each coordinate Fe cation.

The protein belongs to the LuxS family. Homodimer. Fe cation is required as a cofactor.

It carries out the reaction S-(5-deoxy-D-ribos-5-yl)-L-homocysteine = (S)-4,5-dihydroxypentane-2,3-dione + L-homocysteine. Its function is as follows. Involved in the synthesis of autoinducer 2 (AI-2) which is secreted by bacteria and is used to communicate both the cell density and the metabolic potential of the environment. The regulation of gene expression in response to changes in cell density is called quorum sensing. Catalyzes the transformation of S-ribosylhomocysteine (RHC) to homocysteine (HC) and 4,5-dihydroxy-2,3-pentadione (DPD). This chain is S-ribosylhomocysteine lyase, found in Helicobacter hepaticus (strain ATCC 51449 / 3B1).